Consider the following 283-residue polypeptide: MRDNLFIYLQYLLPHTLTSRLVSKLADSENKIIKNHLIKLAIKKFNINLVEAKETDISKYKSFNDFFIRELKDDLRPISNDKNVISSPADGVLSQFGTITDNSLIQAKGKLFSLESLIASSSTTSFTKFATIYLSPKDYHRVHMPIDGKLTKMVYIPGKLFSVNKITTSKVDNLFAKNERLICYFDTIIGEIAVIFVGALLVAGIETVWHGKIAPNYYKDIQTWDYNSAKFNIKFNKGDILGWFNFGSTVIILTSGNNVSFKFEENKNNIKIQVNQDLALITE.

Catalysis depends on charge relay system; for autoendoproteolytic cleavage activity residues D90, H143, and S248. The active-site Schiff-base intermediate with substrate; via pyruvic acid; for decarboxylase activity is S248. Residue S248 is modified to Pyruvic acid (Ser); by autocatalysis.

This sequence belongs to the phosphatidylserine decarboxylase family. PSD-B subfamily. Prokaryotic type I sub-subfamily. Heterodimer of a large membrane-associated beta subunit and a small pyruvoyl-containing alpha subunit. Requires pyruvate as cofactor. Is synthesized initially as an inactive proenzyme. Formation of the active enzyme involves a self-maturation process in which the active site pyruvoyl group is generated from an internal serine residue via an autocatalytic post-translational modification. Two non-identical subunits are generated from the proenzyme in this reaction, and the pyruvate is formed at the N-terminus of the alpha chain, which is derived from the carboxyl end of the proenzyme. The autoendoproteolytic cleavage occurs by a canonical serine protease mechanism, in which the side chain hydroxyl group of the serine supplies its oxygen atom to form the C-terminus of the beta chain, while the remainder of the serine residue undergoes an oxidative deamination to produce ammonia and the pyruvoyl prosthetic group on the alpha chain. During this reaction, the Ser that is part of the protease active site of the proenzyme becomes the pyruvoyl prosthetic group, which constitutes an essential element of the active site of the mature decarboxylase.

Its subcellular location is the cell membrane. The catalysed reaction is a 1,2-diacyl-sn-glycero-3-phospho-L-serine + H(+) = a 1,2-diacyl-sn-glycero-3-phosphoethanolamine + CO2. Its pathway is phospholipid metabolism; phosphatidylethanolamine biosynthesis; phosphatidylethanolamine from CDP-diacylglycerol: step 2/2. Functionally, catalyzes the formation of phosphatidylethanolamine (PtdEtn) from phosphatidylserine (PtdSer). This Francisella tularensis subsp. holarctica (strain OSU18) protein is Phosphatidylserine decarboxylase proenzyme.